A 219-amino-acid polypeptide reads, in one-letter code: Large ribosomal subunit protein uL1 (219 aa).

This sequence belongs to the universal ribosomal protein uL1 family. Component of the large ribosomal subunit.

Its subcellular location is the cytoplasm. This Encephalitozoon cuniculi (strain GB-M1) (Microsporidian parasite) protein is Large ribosomal subunit protein uL1 (RPL1).